Here is a 113-residue protein sequence, read N- to C-terminus: MNTVRVTFLLVFVLVVSLGQADKDENRMEMQEKTEQGKSYLDFAENLLLQKLEELEAKLLEEDSEESRNSRQKRRIGEGVPCDENDPRCCPRLVCLKPTLHGIWYKSYYCYKK.

An N-terminal signal peptide occupies residues 1 to 21; the sequence is MNTVRVTFLLVFVLVVSLGQA. Positions 22 to 74 are excised as a propeptide; the sequence is DKDENRMEMQEKTEQGKSYLDFAENLLLQKLEELEAKLLEEDSEESRNSRQKR. Residues 61-83 are disordered; it reads EEDSEESRNSRQKRRIGEGVPCD. 2 disulfides stabilise this stretch: Cys-82–Cys-95 and Cys-89–Cys-110.

It belongs to the neurotoxin 14 (magi-1) family. 01 (HNTX-16) subfamily. In terms of tissue distribution, expressed by the venom gland.

The protein resides in the secreted. Probable ion channel inhibitor. This is U11-theraphotoxin-Hhn1h from Cyriopagopus hainanus (Chinese bird spider).